The following is a 678-amino-acid chain: Protein mono-ADP-ribosyltransferase PARP15 (678 aa).

The span at 1–19 (MAAPGPLPAAALSPGAPTP) shows a compositional bias: low complexity. The interval 1-67 (MAAPGPLPAA…SSRSMSRDNK (67 aa)) is disordered. Residues 49-58 (GARKASRRSS) are compositionally biased toward basic residues. Macro domains are found at residues 78–267 (NVVA…TNWS) and 293–464 (CFTA…KKRD). Substrate-binding positions include 312 to 313 (DI), 324 to 325 (ST), arginine 331, valine 335, 409 to 413 (GTGNA), and glutamine 449. In terms of domain architecture, PARP catalytic spans 482 to 678 (LPEHWTDMNH…YPEYLITFTA (197 aa)).

It belongs to the ARTD/PARP family.

It localises to the nucleus. It catalyses the reaction L-aspartyl-[protein] + NAD(+) = 4-O-(ADP-D-ribosyl)-L-aspartyl-[protein] + nicotinamide. The enzyme catalyses L-glutamyl-[protein] + NAD(+) = 5-O-(ADP-D-ribosyl)-L-glutamyl-[protein] + nicotinamide. Functionally, mono-ADP-ribosyltransferase that mediates mono-ADP-ribosylation of target proteins. Acts as a negative regulator of transcription. This is Protein mono-ADP-ribosyltransferase PARP15 from Homo sapiens (Human).